Consider the following 727-residue polypeptide: MLTIFPFLEWMCMYRLKDWLLGDLLAGISVGLVQVPQGLTLSLLARQLIPPLNIAYAAFCSSVIYVIFGSCHQMSIGSFFLVSALLINVLKISPLNNGHLVMGSFLKDEFSAPSYLMGYNKSLSVVATTTFLTGIIQLIMGVLGLGFIATYLPESAMSAYLAAVALHIMLSQLTCIFGIMISFHAGPISFFYDIINYCVALPKANSTSILLFLTVVVALRINKCIRISFNQYPIEFPMELFLIIGFTVIGNKITMATETSQTLIDMIPYSFLFPVTPDFSVLPKIILQAISLSLVSSFLLVFLGKKIASLHNYSVNSNQDLIAIGLCNVVSSFFRSCVFTGAVARTIIQDKSGGRQQFASLVGAGVMLLLMVKMGHFFYALPNAVLAGIILSNVVPYLETISNLPSLWRQDQYDCALWMMTFSSSIFLGLDIGLIISVVSAFFITSVRSHRAKILLLGQIPNTNIYRSVNDYREIITIPGVKIFQCCSSITFVNVYYLKHKLLKEVGMVRVPLKEEEIFSLFNSSDTSLQGEKICRCFCNCDDLEPLPRILYTERFENKLDPDASSVNLIHCSHFESVNTSQTASEDQVPYTVSSMSQKNQGQQYEEVEKVWLPNNSSRNSSPGLPDVAESQGRRSLIPYSDASLLPSVHTIILDFSMVHYVDSQGLVVLRQICNAFRNANILILIAGCHSSLFCTGITLPDHITKCQQLSLNSLSRLPSFHLQHIF.

The Cytoplasmic portion of the chain corresponds to 1 to 23 (MLTIFPFLEWMCMYRLKDWLLGD). Residues 24-44 (LLAGISVGLVQVPQGLTLSLL) traverse the membrane as a helical segment. Residues 45 to 47 (ARQ) are Extracellular-facing. Residues 48 to 68 (LIPPLNIAYAAFCSSVIYVIF) form a helical membrane-spanning segment. Residues 69 to 74 (GSCHQM) lie on the Cytoplasmic side of the membrane. Residues 75–95 (SIGSFFLVSALLINVLKISPL) traverse the membrane as a helical segment. The Extracellular segment spans residues 96–130 (NNGHLVMGSFLKDEFSAPSYLMGYNKSLSVVATTT). Asn120 is a glycosylation site (N-linked (GlcNAc...) asparagine). Residues 131-151 (FLTGIIQLIMGVLGLGFIATY) form a helical membrane-spanning segment. Over 152–160 (LPESAMSAY) the chain is Cytoplasmic. The chain crosses the membrane as a helical span at residues 161–181 (LAAVALHIMLSQLTCIFGIMI). Topologically, residues 182–198 (SFHAGPISFFYDIINYC) are extracellular. A helical transmembrane segment spans residues 199–219 (VALPKANSTSILLFLTVVVAL). The Cytoplasmic portion of the chain corresponds to 220–235 (RINKCIRISFNQYPIE). Residues 236 to 256 (FPMELFLIIGFTVIGNKITMA) traverse the membrane as a helical segment. Residues 257 to 283 (TETSQTLIDMIPYSFLFPVTPDFSVLP) are Extracellular-facing. The chain crosses the membrane as a helical span at residues 284 to 304 (KIILQAISLSLVSSFLLVFLG). Residues 305–360 (KKIASLHNYSVNSNQDLIAIGLCNVVSSFFRSCVFTGAVARTIIQDKSGGRQQFAS) are Cytoplasmic-facing. The helical transmembrane segment at 361–381 (LVGAGVMLLLMVKMGHFFYAL) threads the bilayer. Over 382 to 383 (PN) the chain is Extracellular. Residues 384-404 (AVLAGIILSNVVPYLETISNL) traverse the membrane as a helical segment. Over 405 to 424 (PSLWRQDQYDCALWMMTFSS) the chain is Cytoplasmic. The chain crosses the membrane as a helical span at residues 425–445 (SIFLGLDIGLIISVVSAFFIT). Residues 446–727 (SVRSHRAKIL…LPSFHLQHIF (282 aa)) lie on the Extracellular side of the membrane. One can recognise an STAS domain in the interval 471–722 (DYREIITIPG…NSLSRLPSFH (252 aa)). The interval 592–727 (TVSSMSQKNQ…LPSFHLQHIF (136 aa)) is interaction with RACGAP1.

This sequence belongs to the SLC26A/SulP transporter (TC 2.A.53) family. In terms of assembly, interacts with RACGAP1. Interacts with CFTR; stimulates anion transport activity of CFTR. Post-translationally, N-glycosylated.

Its subcellular location is the membrane. It catalyses the reaction sulfate(out) + chloride(in) = sulfate(in) + chloride(out). The enzyme catalyses oxalate(in) + chloride(out) = oxalate(out) + chloride(in). Its function is as follows. Antiporter that mediates the exchange of sulfate and oxalate against chloride ions across a membrane. Stimulates anion transport activity of CFTR. May cooperate with CFTR in the regulation of chloride and bicarbonate ions fluxes required for activation of the ADCY10/PKA pathway during sperm motility and sperm capacitation. May play a role in sperm tail differentiation and motility and hence male fertility. This is Testis anion transporter 1 from Macaca fascicularis (Crab-eating macaque).